The sequence spans 558 residues: Putative F-box/LRR-repeat protein R542 (558 aa).

The region spanning 1–47 is the F-box domain; the sequence is MLLNLPYEILLIIFSLIESKKFFKLLSINKEVREFILTMLNQNPKSF. LRR repeat units lie at residues 73–105, 139–176, 177–220, 251–284, 285–317, 329–361, 369–395, 420–444, 445–477, and 481–508; these read KSTINDDQLKYLSDVYSLNISNCKSITDRGLSF, CGKITDKGIENLVYGKTLNSDEPIPTVINTIRKINLQC, CMRI…KIDG, LDKLTKLILPNVPEHIEYIDFNKMPNLVKADLSG, CINLLDEQLKGLSKVRKLNLKECYDITDVGLSY, CFRITDSGLKYLSNADYVNICGCLKITNEGFFY, VVGYTTLSLYDCMIDGCGDYEYLTISD, CNNIIDVDLKSFTNLPTLSKIDLRY, CNNITNQGLSALCNIPIVKISNNYQISSKGISY, and SKKISIESCPKINSFPNLTGLKKLVFKT.

The chain is Putative F-box/LRR-repeat protein R542 from Acanthamoeba polyphaga mimivirus (APMV).